A 154-amino-acid polypeptide reads, in one-letter code: Hexachlorocyclohexane dehydrochlorinase 1 (154 aa).

Residue Asp-25 is part of the active site. The active-site Proton acceptor is the His-73.

This sequence belongs to the HCH dehydrochlorinase family. Homotrimer.

The protein localises to the periplasm. It catalyses the reaction gamma-hexachlorocyclohexane = (3R,4S,5S,6R)-pentachlorocyclohexene + chloride + H(+). The catalysed reaction is (3R,4S,5S,6R)-pentachlorocyclohexene = (3R,6R)-1,3,4,6-tetrachlorocyclohexa-1,4-diene + chloride + H(+). Its pathway is xenobiotic degradation; hexachlorocyclohexane degradation. Functionally, catalyzes the conversion of the important environmental pollutant gamma-hexachlorocyclohexane (gamma-HCH or lindane) to 1,3,4,6-tetrachloro-1,4-cyclohexadiene (1,4-TCDN) via gamma-pentachlorocyclohexene (gamma-PCCH). Proceeds by two successive 1,2-anti conformationally dependent dehydrochlorinations. Also shows activity with alpha- and delta-HCH, giving alpha- and delta-PCCH respectively, but not with the beta isomer. The sequence is that of Hexachlorocyclohexane dehydrochlorinase 1 from Sphingobium indicum (strain DSM 16412 / CCM 7286 / MTCC 6364 / B90A).